We begin with the raw amino-acid sequence, 581 residues long: MKASQFFISTLKEAPADAEVVSHKLMTRAGLIKKLGAGIYNYMPMGLRVIRKVEAIVREEMNRAGAVEVTMPVVQPAEMWEETGRFEKMGPELLRIKDRHGRDFVIQPTSEEVVTDIARQELKSYKQLPKNFYQIQTKFRDERRPRFGLMRGREFIMKDAYSFDKDRDTAQISYQTMRAAYKRIFDRFGLQYRAVRADSGAIGGDLSEEFQVIASTGEDAIVYCPSSDYAANIEKAEALAPAGPRPAAAQAMARVATPGNSTCESVAGQLGLPLSQTVKSLVLATDKLDDKGDVAGSQVWLLLLRGDHEMNEIKVAKVPGLDVGFRFATVAEIEEHFGCQPGYLGPIGLKKPVKLVVDREVAVMADWVCGANEADFHITGVNFGRDLPEPDVVADLRNVVAGDKSPDGAGELAIERGIEVGHVFYLGTKYSQAMNATFLAENGKPSLFEMGCYGIGVTRLPAAAIEQNHDERGIIWPDAIAPFTVVVCPIGMDRSEPVKEAAEKLHAELLALGVDVILDDRGERPGAMFADWELIGVPHRVVLSDRGLKEGQVEYQHRRDTEATKMAAADVLGHLKQRLGL.

It belongs to the class-II aminoacyl-tRNA synthetase family. ProS type 1 subfamily. Homodimer.

Its subcellular location is the cytoplasm. It carries out the reaction tRNA(Pro) + L-proline + ATP = L-prolyl-tRNA(Pro) + AMP + diphosphate. Catalyzes the attachment of proline to tRNA(Pro) in a two-step reaction: proline is first activated by ATP to form Pro-AMP and then transferred to the acceptor end of tRNA(Pro). As ProRS can inadvertently accommodate and process non-cognate amino acids such as alanine and cysteine, to avoid such errors it has two additional distinct editing activities against alanine. One activity is designated as 'pretransfer' editing and involves the tRNA(Pro)-independent hydrolysis of activated Ala-AMP. The other activity is designated 'posttransfer' editing and involves deacylation of mischarged Ala-tRNA(Pro). The misacylated Cys-tRNA(Pro) is not edited by ProRS. The protein is Proline--tRNA ligase of Delftia acidovorans (strain DSM 14801 / SPH-1).